Consider the following 265-residue polypeptide: Phosphonates import ATP-binding protein PhnC 1 (265 aa).

Residues 3–247 enclose the ABC transporter domain; the sequence is LRLSAIELRH…HLDTLYANEQ (245 aa). ATP is bound at residue 36-43; the sequence is GPSGAGKT.

The protein belongs to the ABC transporter superfamily. Phosphonates importer (TC 3.A.1.9.1) family. The complex is composed of two ATP-binding proteins (PhnC), two transmembrane proteins (PhnE) and a solute-binding protein (PhnD).

It is found in the cell inner membrane. It carries out the reaction phosphonate(out) + ATP + H2O = phosphonate(in) + ADP + phosphate + H(+). In terms of biological role, part of the ABC transporter complex PhnCDE involved in phosphonates import. Responsible for energy coupling to the transport system. The polypeptide is Phosphonates import ATP-binding protein PhnC 1 (Pseudomonas syringae pv. syringae (strain B728a)).